The primary structure comprises 215 residues: Putative ribosome biogenesis protein slx9-like (215 aa).

Disordered stretches follow at residues 49-121 (IIPS…GLGM), 133-157 (DSMKLQPKTKGPKLTNEKRKKMSLK), and 189-215 (LQNQKIKQEQDFKPNNNNNNRNKLKRK).

This sequence belongs to the SLX9 family.

Its subcellular location is the nucleus. It is found in the nucleolus. Its function is as follows. Involved in ribosome biogenesis. The chain is Putative ribosome biogenesis protein slx9-like from Dictyostelium discoideum (Social amoeba).